Here is a 280-residue protein sequence, read N- to C-terminus: 2,3,4,5-tetrahydropyridine-2,6-dicarboxylate N-succinyltransferase (280 aa).

Residues arginine 107 and aspartate 144 each contribute to the substrate site.

The protein belongs to the transferase hexapeptide repeat family. Homotrimer.

It is found in the cytoplasm. It catalyses the reaction (S)-2,3,4,5-tetrahydrodipicolinate + succinyl-CoA + H2O = (S)-2-succinylamino-6-oxoheptanedioate + CoA. Its pathway is amino-acid biosynthesis; L-lysine biosynthesis via DAP pathway; LL-2,6-diaminopimelate from (S)-tetrahydrodipicolinate (succinylase route): step 1/3. This chain is 2,3,4,5-tetrahydropyridine-2,6-dicarboxylate N-succinyltransferase, found in Paramagnetospirillum magneticum (strain ATCC 700264 / AMB-1) (Magnetospirillum magneticum).